Consider the following 220-residue polypeptide: uncharacterized protein (220 aa).

The chain crosses the membrane as a helical span at residues 10–30 (FFIIGGVILSIGLILFFLLGF).

It localises to the membrane. This is an uncharacterized protein from Methanocaldococcus jannaschii (strain ATCC 43067 / DSM 2661 / JAL-1 / JCM 10045 / NBRC 100440) (Methanococcus jannaschii).